We begin with the raw amino-acid sequence, 46 residues long: DNA-directed RNA polymerases I, II, and III subunit rpabc4 (46 aa).

Cysteine 7, cysteine 10, cysteine 24, and cysteine 27 together coordinate Zn(2+). The segment at 7–27 (CGECGAEHEIKPKEPVKCKDC) adopts a C4-type zinc-finger fold.

The protein belongs to the archaeal Rpo12/eukaryotic RPC10 RNA polymerase subunit family. In terms of assembly, component of the RNA polymerase I (Pol I), RNA polymerase II (Pol II) and RNA polymerase III (Pol III) complexes consisting of at least 13, 12 and 17 subunits, respectively.

The protein localises to the nucleus. Its function is as follows. DNA-dependent RNA polymerase catalyzes the transcription of DNA into RNA using the four ribonucleoside triphosphates as substrates. Common component of RNA polymerases I, II and III which synthesize ribosomal RNA precursors, mRNA precursors and many functional non-coding RNAs, and a small RNAs, such as 5S rRNA and tRNAs, respectively. In Dictyostelium discoideum (Social amoeba), this protein is DNA-directed RNA polymerases I, II, and III subunit rpabc4 (polr2k).